The chain runs to 133 residues: Small ribosomal subunit protein uS8 (133 aa).

The protein belongs to the universal ribosomal protein uS8 family. In terms of assembly, part of the 30S ribosomal subunit.

Functionally, one of the primary rRNA binding proteins, it binds directly to 16S rRNA central domain where it helps coordinate assembly of the platform of the 30S subunit. This Sulfolobus acidocaldarius (strain ATCC 33909 / DSM 639 / JCM 8929 / NBRC 15157 / NCIMB 11770) protein is Small ribosomal subunit protein uS8.